A 186-amino-acid chain; its full sequence is Elongation factor P (186 aa).

Belongs to the elongation factor P family.

The protein resides in the cytoplasm. It participates in protein biosynthesis; polypeptide chain elongation. Its function is as follows. Involved in peptide bond synthesis. Stimulates efficient translation and peptide-bond synthesis on native or reconstituted 70S ribosomes in vitro. Probably functions indirectly by altering the affinity of the ribosome for aminoacyl-tRNA, thus increasing their reactivity as acceptors for peptidyl transferase. The protein is Elongation factor P of Shewanella loihica (strain ATCC BAA-1088 / PV-4).